The sequence spans 209 residues: Ubiquitin-conjugating enzyme E2 S (209 aa).

Residues 14-160 enclose the UBC core domain; that stretch reads QTIRQVMREL…ARMMTEIHAQ (147 aa). Cys-98 acts as the Glycyl thioester intermediate in catalysis. The disordered stretch occupies residues 164-209; the sequence is CAAGAAGDSKDDDGPSTKKHAGLDKKLQDKKKEKLLKEKKRMLKRL. The segment covering 171 to 199 has biased composition (basic and acidic residues); the sequence is DSKDDDGPSTKKHAGLDKKLQDKKKEKLL. Positions 200-209 are enriched in basic residues; sequence KEKKRMLKRL.

This sequence belongs to the ubiquitin-conjugating enzyme family.

It catalyses the reaction S-ubiquitinyl-[E1 ubiquitin-activating enzyme]-L-cysteine + [E2 ubiquitin-conjugating enzyme]-L-cysteine = [E1 ubiquitin-activating enzyme]-L-cysteine + S-ubiquitinyl-[E2 ubiquitin-conjugating enzyme]-L-cysteine.. It participates in protein modification; protein ubiquitination. Its function is as follows. Catalyzes the covalent attachment of ubiquitin to other proteins. Acts as an essential factor of the anaphase promoting complex/cyclosome (APC/C), a cell cycle-regulated ubiquitin ligase that controls progression through mitosis. Acts by specifically elongating polyubiquitin chains initiated by the E2 enzyme vih/UbcH10 on APC/C substrates, enhancing the degradation of APC/C substrates by the proteasome and promoting mitotic exit. The protein is Ubiquitin-conjugating enzyme E2 S of Drosophila ananassae (Fruit fly).